The following is a 428-amino-acid chain: MSTKGEHHTVPLSVLLKRESANEKIDNPELIHGQHNQSKKGEDFTLVKTECQRVMGDGVTTFSVFGLFDGHNGSAAAIYTKENLLNNVLAAIPSDLNRDEWVAALPRALVAGFVKTDKDFQERARTSGTTVTFVIVEGWVVSVASVGDSRCILEPAEGGVYYLSADHRLEINEEERDRVTASGGEVGRLNTGGGTEIGPLRCWPGGLCLSRSIGDLDVGEYIVPVPYVKQVKLSSAGGRLIISSDGVWDAISAEEALDCCRGLPPESSAEHIVKEAVGKKGIRDDTTCIVVDILPLEKPAASVPPPKKQGKGMLKSMFKRKTSDSSSNIEKEYAEPDVVEELFEEGSAMLSERLDTKYPLCNMFKLFMCAVCQVEVKPGEGVSIHAGSDNCRKLRPWDGPFLCASCQDKKDAMEGKRSSGDRHSSESD.

The PPM-type phosphatase domain maps to 24–293 (KIDNPELIHG…DDTTCIVVDI (270 aa)). Mn(2+) is bound by residues Asp69, Gly70, Asp245, and Asp284. The tract at residues 301–331 (ASVPPPKKQGKGMLKSMFKRKTSDSSSNIEK) is disordered.

Belongs to the PP2C family. Mg(2+) is required as a cofactor. The cofactor is Mn(2+).

It catalyses the reaction O-phospho-L-seryl-[protein] + H2O = L-seryl-[protein] + phosphate. It carries out the reaction O-phospho-L-threonyl-[protein] + H2O = L-threonyl-[protein] + phosphate. The polypeptide is Probable protein phosphatase 2C 12 (Arabidopsis thaliana (Mouse-ear cress)).